Here is a 602-residue protein sequence, read N- to C-terminus: Aspartate--tRNA(Asp/Asn) ligase (602 aa).

Glutamate 176 provides a ligand contact to L-aspartate. Residues 200–203 are aspartate; sequence QQFK. Arginine 222 and histidine 452 together coordinate L-aspartate. 222–224 provides a ligand contact to ATP; it reads RDE. An ATP-binding site is contributed by glutamate 490. An L-aspartate-binding site is contributed by arginine 497. Residue 542-545 participates in ATP binding; it reads GIDR.

This sequence belongs to the class-II aminoacyl-tRNA synthetase family. Type 1 subfamily. As to quaternary structure, homodimer.

The protein resides in the cytoplasm. It catalyses the reaction tRNA(Asx) + L-aspartate + ATP = L-aspartyl-tRNA(Asx) + AMP + diphosphate. Functionally, aspartyl-tRNA synthetase with relaxed tRNA specificity since it is able to aspartylate not only its cognate tRNA(Asp) but also tRNA(Asn). Reaction proceeds in two steps: L-aspartate is first activated by ATP to form Asp-AMP and then transferred to the acceptor end of tRNA(Asp/Asn). The chain is Aspartate--tRNA(Asp/Asn) ligase from Rickettsia conorii (strain ATCC VR-613 / Malish 7).